Reading from the N-terminus, the 489-residue chain is UDP-N-acetylmuramoyl-L-alanyl-D-glutamate--2,6-diaminopimelate ligase (489 aa).

S30 provides a ligand contact to UDP-N-acetyl-alpha-D-muramoyl-L-alanyl-D-glutamate. 110 to 116 (GTNGKTT) contributes to the ATP binding site. Residues 152–153 (TT), S179, and R187 contribute to the UDP-N-acetyl-alpha-D-muramoyl-L-alanyl-D-glutamate site. K219 is modified (N6-carboxylysine). Residues R381, 405-408 (DNPR), G458, and E462 each bind meso-2,6-diaminopimelate. Positions 405-408 (DNPR) match the Meso-diaminopimelate recognition motif motif.

It belongs to the MurCDEF family. MurE subfamily. Mg(2+) serves as cofactor. Carboxylation is probably crucial for Mg(2+) binding and, consequently, for the gamma-phosphate positioning of ATP.

The protein localises to the cytoplasm. The enzyme catalyses UDP-N-acetyl-alpha-D-muramoyl-L-alanyl-D-glutamate + meso-2,6-diaminopimelate + ATP = UDP-N-acetyl-alpha-D-muramoyl-L-alanyl-gamma-D-glutamyl-meso-2,6-diaminopimelate + ADP + phosphate + H(+). The protein operates within cell wall biogenesis; peptidoglycan biosynthesis. In terms of biological role, catalyzes the addition of meso-diaminopimelic acid to the nucleotide precursor UDP-N-acetylmuramoyl-L-alanyl-D-glutamate (UMAG) in the biosynthesis of bacterial cell-wall peptidoglycan. In Syntrophomonas wolfei subsp. wolfei (strain DSM 2245B / Goettingen), this protein is UDP-N-acetylmuramoyl-L-alanyl-D-glutamate--2,6-diaminopimelate ligase.